The sequence spans 177 residues: Large ribosomal subunit protein uL6 (177 aa).

Belongs to the universal ribosomal protein uL6 family. In terms of assembly, part of the 50S ribosomal subunit.

This protein binds to the 23S rRNA, and is important in its secondary structure. It is located near the subunit interface in the base of the L7/L12 stalk, and near the tRNA binding site of the peptidyltransferase center. This Sinorhizobium medicae (strain WSM419) (Ensifer medicae) protein is Large ribosomal subunit protein uL6.